A 206-amino-acid chain; its full sequence is 3-demethoxyubiquinol 3-hydroxylase (206 aa).

Fe cation contacts are provided by Glu55, Glu85, His88, Glu137, Glu169, and His172.

It belongs to the COQ7 family. Fe cation serves as cofactor.

The protein resides in the cell membrane. The catalysed reaction is a 5-methoxy-2-methyl-3-(all-trans-polyprenyl)benzene-1,4-diol + AH2 + O2 = a 3-demethylubiquinol + A + H2O. It participates in cofactor biosynthesis; ubiquinone biosynthesis. Functionally, catalyzes the hydroxylation of 2-nonaprenyl-3-methyl-6-methoxy-1,4-benzoquinol during ubiquinone biosynthesis. This Aromatoleum aromaticum (strain DSM 19018 / LMG 30748 / EbN1) (Azoarcus sp. (strain EbN1)) protein is 3-demethoxyubiquinol 3-hydroxylase.